The primary structure comprises 217 residues: Probable GTP-binding protein EngB (217 aa).

In terms of domain architecture, EngB-type G spans 37–214 (AGVEVAFAGR…RAAMARLIGE (178 aa)). Residues 45–52 (GRSNVGKS), 72–76 (GRTQE), 92–95 (DMPG), 159–162 (TKAD), and 193–195 (TSS) contribute to the GTP site. Residues Ser-52 and Thr-74 each coordinate Mg(2+).

It belongs to the TRAFAC class TrmE-Era-EngA-EngB-Septin-like GTPase superfamily. EngB GTPase family. Requires Mg(2+) as cofactor.

Its function is as follows. Necessary for normal cell division and for the maintenance of normal septation. The protein is Probable GTP-binding protein EngB of Nitrobacter hamburgensis (strain DSM 10229 / NCIMB 13809 / X14).